The sequence spans 307 residues: 4-diphosphocytidyl-2-C-methyl-D-erythritol kinase (307 aa).

Lys-9 is a catalytic residue. 94–104 (PIGAGLAGGSS) contributes to the ATP binding site. The active site involves Asp-136.

It belongs to the GHMP kinase family. IspE subfamily.

The catalysed reaction is 4-CDP-2-C-methyl-D-erythritol + ATP = 4-CDP-2-C-methyl-D-erythritol 2-phosphate + ADP + H(+). It participates in isoprenoid biosynthesis; isopentenyl diphosphate biosynthesis via DXP pathway; isopentenyl diphosphate from 1-deoxy-D-xylulose 5-phosphate: step 3/6. Its function is as follows. Catalyzes the phosphorylation of the position 2 hydroxy group of 4-diphosphocytidyl-2C-methyl-D-erythritol. This chain is 4-diphosphocytidyl-2-C-methyl-D-erythritol kinase, found in Synechococcus sp. (strain CC9902).